Consider the following 833-residue polypeptide: Probable glucan 1,3-beta-glucosidase D (833 aa).

A compositionally biased stretch (basic and acidic residues) spans 1-33 (MPTHSRSRDRYGGRDSDREARYDYDYARRRYAT). The interval 1–228 (MPTHSRSRDR…RKRQKKLAVV (228 aa)) is disordered. The Cytoplasmic segment spans residues 1–305 (MPTHSRSRDR…GGRPFWKRKR (305 aa)). Residues 34-45 (DDDDDYDDDELE) are compositionally biased toward acidic residues. 2 stretches are compositionally biased toward basic and acidic residues: residues 46–75 (HDLT…RDAE) and 97–172 (YGDD…ETAA). Over residues 183–196 (SASHLLSADALAKL) the composition is skewed to low complexity. Positions 200–217 (YEKEERRKREIAKDAAKA) are enriched in basic and acidic residues. A helical; Signal-anchor for type II membrane protein membrane pass occupies residues 306–326 (WIGLGALIIILVIVIPVAVVV). At 327–833 (SKKHDNKSDP…PDFGDLPEYY (507 aa)) the chain is on the extracellular side. The segment at 331–353 (DNKSDPADSQGTSPGKSNLDGLS) is disordered. N-linked (GlcNAc...) asparagine glycosylation occurs at Asn-332. The span at 337-346 (ADSQGTSPGK) shows a compositional bias: polar residues. Asn-378, Asn-383, Asn-395, Asn-548, Asn-560, and Asn-569 each carry an N-linked (GlcNAc...) asparagine glycan. Residue Glu-599 is the Proton donor of the active site. Asn-638, Asn-671, and Asn-691 each carry an N-linked (GlcNAc...) asparagine glycan. Catalysis depends on Glu-704, which acts as the Nucleophile.

This sequence belongs to the glycosyl hydrolase 5 (cellulase A) family.

It localises to the cell membrane. It carries out the reaction Successive hydrolysis of beta-D-glucose units from the non-reducing ends of (1-&gt;3)-beta-D-glucans, releasing alpha-glucose.. Functionally, glucosidase involved in the degradation of cellulosic biomass. Active on lichenan. The protein is Probable glucan 1,3-beta-glucosidase D (exgD) of Aspergillus fumigatus (strain CBS 144.89 / FGSC A1163 / CEA10) (Neosartorya fumigata).